The following is a 108-amino-acid chain: Histone H4 (108 aa).

The segment at Met1–Thr36 is disordered. The span at Gly9 to Val19 shows a compositional bias: gly residues.

The protein belongs to the histone H4 family. As to quaternary structure, the nucleosome is a histone octamer containing two molecules each of H2A, H2B, H3 and H4 assembled in one H3-H4 heterotetramer and two H2A-H2B heterodimers. The octamer wraps approximately 147 bp of DNA.

The protein resides in the nucleus. Its subcellular location is the chromosome. Its function is as follows. Core component of nucleosome. Nucleosomes wrap and compact DNA into chromatin, limiting DNA accessibility to the cellular machineries which require DNA as a template. Histones thereby play a central role in transcription regulation, DNA repair, DNA replication and chromosomal stability. DNA accessibility is regulated via a complex set of post-translational modifications of histones, also called histone code, and nucleosome remodeling. This is Histone H4 (H4a) from Dictyostelium discoideum (Social amoeba).